Here is a 52-residue protein sequence, read N- to C-terminus: ERMES regulator 1 (52 aa).

Topologically, residues 1-27 are mitochondrial intermembrane; that stretch reads MIFFFNQIRSIFTALHTPTQQIQLSRR. A helical transmembrane segment spans residues 28 to 46; it reads AFFQFLGYLGSCVVISLAA. The Cytoplasmic portion of the chain corresponds to 47 to 52; that stretch reads QSKYVQ.

This sequence belongs to the EMR1 family.

The protein localises to the mitochondrion outer membrane. Mediates the formation of endoplasmic reticulum (ER)-mitochondria encounter structure (ERMES) foci, thereby contributing to the formation of ER-mitochondrial contact sites. This chain is ERMES regulator 1, found in Saccharomyces cerevisiae (strain ATCC 204508 / S288c) (Baker's yeast).